A 234-amino-acid chain; its full sequence is Carboxy-S-adenosyl-L-methionine synthase (234 aa).

S-adenosyl-L-methionine is bound by residues Tyr-35, Gly-60 to Ser-62, Asp-109 to Val-110, Asn-124, and Arg-191.

This sequence belongs to the class I-like SAM-binding methyltransferase superfamily. Cx-SAM synthase family. Homodimer.

It carries out the reaction prephenate + S-adenosyl-L-methionine = carboxy-S-adenosyl-L-methionine + 3-phenylpyruvate + H2O. In terms of biological role, catalyzes the conversion of S-adenosyl-L-methionine (SAM) to carboxy-S-adenosyl-L-methionine (Cx-SAM). The protein is Carboxy-S-adenosyl-L-methionine synthase of Campylobacter curvus (strain 525.92).